Consider the following 224-residue polypeptide: Deoxyribose-phosphate aldolase (224 aa).

The active-site Proton donor/acceptor is the aspartate 98. The active-site Schiff-base intermediate with acetaldehyde is lysine 159. The Proton donor/acceptor role is filled by lysine 189.

This sequence belongs to the DeoC/FbaB aldolase family. DeoC type 1 subfamily.

The protein localises to the cytoplasm. The catalysed reaction is 2-deoxy-D-ribose 5-phosphate = D-glyceraldehyde 3-phosphate + acetaldehyde. It participates in carbohydrate degradation; 2-deoxy-D-ribose 1-phosphate degradation; D-glyceraldehyde 3-phosphate and acetaldehyde from 2-deoxy-alpha-D-ribose 1-phosphate: step 2/2. Catalyzes a reversible aldol reaction between acetaldehyde and D-glyceraldehyde 3-phosphate to generate 2-deoxy-D-ribose 5-phosphate. This is Deoxyribose-phosphate aldolase from Methanothermobacter thermautotrophicus (strain ATCC 29096 / DSM 1053 / JCM 10044 / NBRC 100330 / Delta H) (Methanobacterium thermoautotrophicum).